The chain runs to 116 residues: NADH-ubiquinone oxidoreductase chain 3 (116 aa).

A run of 3 helical transmembrane segments spans residues 6-26 (FMLLLSLTLSIILTTINFWLA), 56-76 (FFLVAILFLLFDLEIALLLPL), and 85-105 (PLLTLLWTSILLLLLTLGLVY).

Belongs to the complex I subunit 3 family.

The protein localises to the mitochondrion membrane. It catalyses the reaction a ubiquinone + NADH + 5 H(+)(in) = a ubiquinol + NAD(+) + 4 H(+)(out). In terms of biological role, core subunit of the mitochondrial membrane respiratory chain NADH dehydrogenase (Complex I) that is believed to belong to the minimal assembly required for catalysis. Complex I functions in the transfer of electrons from NADH to the respiratory chain. The immediate electron acceptor for the enzyme is believed to be ubiquinone. The sequence is that of NADH-ubiquinone oxidoreductase chain 3 (MT-ND3) from Struthio camelus (Common ostrich).